Here is an 831-residue protein sequence, read N- to C-terminus: V-type proton ATPase 116 kDa subunit a1 (831 aa).

Topologically, residues 1–388 (MGELFRSEEM…DAYGIGSYRE (388 aa)) are cytoplasmic. The chain crosses the membrane as a helical span at residues 389-407 (INPAPYTIITFPFLFAVMF). Topologically, residues 408–409 (GD) are vacuolar. Residues 410–426 (FGHGILMTLFAVWMVVR) form a helical membrane-spanning segment. Topologically, residues 427–441 (ESRILSQKIDNELFS) are cytoplasmic. A helical transmembrane segment spans residues 442-471 (MMFSGRYIILLMGLFSTYTGLIYNDCFSKA). The Vacuolar segment spans residues 472 to 534 (LNLFGSSWSV…ATNKLTFLNS (63 aa)). A helical membrane pass occupies residues 535 to 554 (FKMKMSVILGIIHMIFGVAL). The Cytoplasmic segment spans residues 555-572 (SVLNHIYFKKPLNIYLSF). Residues 573–593 (IPEMIFMTTLFGYLVILIIYK) form a helical membrane-spanning segment. Residues 594-638 (WCAYDVSTSMVAPSLLIHFINMFLFSYQDTSLPMLYKGQMGLQCF) lie on the Vacuolar side of the membrane. A helical membrane pass occupies residues 639–658 (LVVCAIICVPWMLVLKPLIL). Over 659–718 (RRQYLRRKHLGTHNFGGIRVGNGPTEEDAEIIQHDQLSMHSDEEEEFDFGDTVVHQAIHT) the chain is Cytoplasmic. A helical membrane pass occupies residues 719 to 743 (IEYCLGCISNTASYLRLWALSLAHA). The Vacuolar segment spans residues 744-764 (QLSEVLWTMVMHIGLNIRSLG). Residues 765 to 803 (GGIALVFIFSAFATLTIAILLIMEGLSAFLHALRLHWVE) form a helical membrane-spanning segment. Residues 804-831 (FRNKFYMGTGFKFLPFSFETIWEGKFDD) lie on the Cytoplasmic side of the membrane.

The protein belongs to the V-ATPase 116 kDa subunit family. As to quaternary structure, V-ATPase is a heteromultimeric enzyme made up of two complexes: the ATP-hydrolytic V1 complex and the proton translocation V0 complex. The V1 complex consists of three catalytic AB heterodimers that form a heterohexamer, three peripheral stalks each consisting of EG heterodimers, one central rotor including subunits D and F, and the regulatory subunits C and H. The proton translocation complex V0 consists of the proton transport subunit a, a ring of proteolipid subunits c9c'', rotary subunit d, subunits e and f, and two accessory subunits.

The protein resides in the cytoplasmic vesicle. The protein localises to the clathrin-coated vesicle membrane. It localises to the secretory vesicle. Its subcellular location is the synaptic vesicle membrane. It is found in the melanosome. Functionally, subunit of the V0 complex of vacuolar(H+)-ATPase (V-ATPase), a multisubunit enzyme composed of a peripheral complex (V1) that hydrolyzes ATP and a membrane integral complex (V0) that translocates protons. V-ATPase is responsible for acidifying and maintaining the pH of intracellular compartments and in some cell types, is targeted to the plasma membrane, where it is responsible for acidifying the extracellular environment. Required for assembly and activity of the vacuolar ATPase. This Xenopus laevis (African clawed frog) protein is V-type proton ATPase 116 kDa subunit a1 (atp6v0a1).